We begin with the raw amino-acid sequence, 608 residues long: MAASSSSSSPAAASAPFAAPGPHRRPGLALRPSPPTPPSSSLSCCRASPAAAAVSSVSATAAPNRGPRGMGLRCRASEGAAAAARKEAPLKVMISGAPASGKGTQCRMIVEKYGLVHISTGDLLRAEVSSGTEIGKKAKEYMDNGMLVPDQVVTDMVVSRLSQPDVRERGWLLDGYPRSYAQAQSLESMKIRPDIFIVLEVPDDILIDRCVGRRLDPETGKIYHIKNFPPENDEVSARLVTRSDDTFEKVKSRLDTYKQNSEAVIPTYSDLLNQIDGNRQVEVVFNEIDSLLQKICENASFNMLAKTNGKPQDSKDTTASKNEFRGIPTRLNNIPHSREIRKYFYNDVLVATRHAVEDKKTRLQIDINIPELNPEMDVYRIGTLMELVRELSLSFADDGKRVKVCVQGSMGQGAFAGIPLQLAGTRKILEIMDWGEYGAKGTFINFGAVGASEVDKEDDMFILIAPQNAVGNCIIDDMKAMTDAAGDRPVILVNPRLKDMPGSSGVMQTMGRDMRLKYAASFETCYSFRLLFYAGSFYPIMGALRMAYPNKYEIYRRVDEPNGQERYVLLEEFVEKPTPDEITNAFRPRKNENEKSASGFWGFLSGIL.

Over residues 1 to 20 (MAASSSSSSPAAASAPFAAP) the composition is skewed to low complexity. The tract at residues 1-44 (MAASSSSSSPAAASAPFAAPGPHRRPGLALRPSPPTPPSSSLSC) is disordered. The transit peptide at 1–75 (MAASSSSSSP…GPRGMGLRCR (75 aa)) directs the protein to the chloroplast. 99 to 104 (ASGKGT) contributes to the ATP binding site. Residues 119–148 (STGDLLRAEVSSGTEIGKKAKEYMDNGMLV) form an NMP region. AMP-binding positions include threonine 120, arginine 125, 146–148 (MLV), 175–178 (GYPR), and glutamine 182. Residues arginine 209, arginine 213, and 222-223 (IY) contribute to the ATP site. The tract at residues 212 to 245 (GRRLDPETGKIYHIKNFPPENDEVSARLVTRSDD) is LID. AMP-binding residues include arginine 242 and arginine 253.

This sequence belongs to the adenylate kinase family.

The protein resides in the plastid. The protein localises to the chloroplast. It catalyses the reaction AMP + ATP = 2 ADP. In terms of biological role, catalyzes the reversible transfer of the terminal phosphate group between ATP and AMP. Plays an important role in cellular energy homeostasis and in adenine nucleotide metabolism. In Oryza sativa subsp. japonica (Rice), this protein is Probable adenylate kinase 5, chloroplastic.